Reading from the N-terminus, the 197-residue chain is Protein GrpE (197 aa).

The interval 1 to 43 (MSSKEQKTPDGQAPEEIVTEQHEEVESVESAESAEQVDPRDEE) is disordered.

Belongs to the GrpE family. Homodimer.

It is found in the cytoplasm. Functionally, participates actively in the response to hyperosmotic and heat shock by preventing the aggregation of stress-denatured proteins, in association with DnaK and GrpE. It is the nucleotide exchange factor for DnaK and may function as a thermosensor. Unfolded proteins bind initially to DnaJ; upon interaction with the DnaJ-bound protein, DnaK hydrolyzes its bound ATP, resulting in the formation of a stable complex. GrpE releases ADP from DnaK; ATP binding to DnaK triggers the release of the substrate protein, thus completing the reaction cycle. Several rounds of ATP-dependent interactions between DnaJ, DnaK and GrpE are required for fully efficient folding. This is Protein GrpE from Cronobacter sakazakii (strain ATCC BAA-894) (Enterobacter sakazakii).